The sequence spans 113 residues: Cell cycle protein GpsB (113 aa).

The stretch at 37–63 forms a coiled coil; it reads KDYETYATLVKSLRQEIADLKEELTRK. A disordered region spans residues 61-82; sequence TRKPQVSSAPSPSHPDPIDVAA.

This sequence belongs to the GpsB family. As to quaternary structure, forms polymers through the coiled coil domains. Interacts with PBP1, MreC and EzrA.

The protein localises to the cytoplasm. Its function is as follows. Divisome component that associates with the complex late in its assembly, after the Z-ring is formed, and is dependent on DivIC and PBP2B for its recruitment to the divisome. Together with EzrA, is a key component of the system that regulates PBP1 localization during cell cycle progression. Its main role could be the removal of PBP1 from the cell pole after pole maturation is completed. Also contributes to the recruitment of PBP1 to the division complex. Not essential for septum formation. This Streptococcus pneumoniae (strain ATCC 700669 / Spain 23F-1) protein is Cell cycle protein GpsB.